The primary structure comprises 157 residues: Protein Smg (157 aa).

It belongs to the Smg family.

This Shigella boydii serotype 4 (strain Sb227) protein is Protein Smg.